Here is a 131-residue protein sequence, read N- to C-terminus: D-ribose pyranase (131 aa).

His-20 serves as the catalytic Proton donor. Substrate is bound by residues Asp-28, His-98, and 120 to 122 (YAN).

It belongs to the RbsD / FucU family. RbsD subfamily. In terms of assembly, homodecamer.

Its subcellular location is the cytoplasm. It carries out the reaction beta-D-ribopyranose = beta-D-ribofuranose. It functions in the pathway carbohydrate metabolism; D-ribose degradation; D-ribose 5-phosphate from beta-D-ribopyranose: step 1/2. Functionally, catalyzes the interconversion of beta-pyran and beta-furan forms of D-ribose. The chain is D-ribose pyranase from Bacillus anthracis (strain A0248).